A 451-amino-acid chain; its full sequence is Endosomal transmembrane epsin interactor 1 (451 aa).

Positions 1–29 (MILLVNLFVLLSVVCILLNLAGFILGCQG) are cleaved as a signal peptide. Residues 30-85 (AQFVSSVPRCDLVDLGEGKICFCCEEFQPAKCTDKENALKLFPVQPCSAVHLLLKK) are Lumenal-facing. Residues 86 to 106 (VLFALCALNALTTTVCLVAAA) traverse the membrane as a helical segment. Residues 107–451 (LRYLQIFASR…LIGVIRETVL (345 aa)) are Cytoplasmic-facing. A mediates interaction with EPN1 region spans residues 107 to 451 (LRYLQIFASR…LIGVIRETVL (345 aa)). 2 consecutive short sequence motifs (PPxY; mediates interaction with ITCH) follow at residues 148 to 151 (PPSY) and 194 to 197 (PPPY). Over residues 204-213 (TDQEQESSFQ) the composition is skewed to polar residues. Positions 204–224 (TDQEQESSFQMPEGPETAASP) are disordered. Lys274 participates in a covalent cross-link: Glycyl lysine isopeptide (Lys-Gly) (interchain with G-Cter in ubiquitin). Residue Ser275 is modified to Phosphoserine. Residue Lys365 forms a Glycyl lysine isopeptide (Lys-Gly) (interchain with G-Cter in ubiquitin) linkage.

The protein belongs to the ENTREP family. As to quaternary structure, interacts with ITCH; enhances the ubiquitination of CXCR4 by ITCH and the subsequent endocytosis and desensitization of the receptor. Interacts with EPN1.

Its subcellular location is the early endosome membrane. It is found in the late endosome membrane. The protein localises to the recycling endosome membrane. The protein resides in the cell membrane. Its function is as follows. Functions as an activator of the E3 ubiquitin protein ligase ITCH in the ubiquitination of the CXCL12-activated CXCR4 receptor. Thereby, triggers CXCR4 endocytosis and desensitization, negatively regulating the CXCL12/CXCR4 signaling pathway. This Mus musculus (Mouse) protein is Endosomal transmembrane epsin interactor 1.